The chain runs to 212 residues: ATP-dependent Clp protease proteolytic subunit 2 (212 aa).

The interval 1 to 20 (MSHNTSIASQGMPAMAGPET) is disordered. Serine 107 serves as the catalytic Nucleophile. Histidine 132 is a catalytic residue.

The protein belongs to the peptidase S14 family. As to quaternary structure, fourteen ClpP subunits assemble into 2 heptameric rings which stack back to back to give a disk-like structure with a central cavity, resembling the structure of eukaryotic proteasomes.

It localises to the cytoplasm. The catalysed reaction is Hydrolysis of proteins to small peptides in the presence of ATP and magnesium. alpha-casein is the usual test substrate. In the absence of ATP, only oligopeptides shorter than five residues are hydrolyzed (such as succinyl-Leu-Tyr-|-NHMec, and Leu-Tyr-Leu-|-Tyr-Trp, in which cleavage of the -Tyr-|-Leu- and -Tyr-|-Trp bonds also occurs).. Cleaves peptides in various proteins in a process that requires ATP hydrolysis. Has a chymotrypsin-like activity. Plays a major role in the degradation of misfolded proteins. This is ATP-dependent Clp protease proteolytic subunit 2 from Cutibacterium acnes (strain DSM 16379 / KPA171202) (Propionibacterium acnes).